The sequence spans 198 residues: Interferon gamma (198 aa).

A signal peptide spans 1–23; that stretch reads MMVSTARAVVCLSLCLCVCQVRG. Residues asparagine 31, asparagine 42, and asparagine 174 are each glycosylated (N-linked (GlcNAc...) asparagine). A disordered region spans residues 173–198; sequence SNNTKMQRRRRRRRRQARKVKTPTRA. A compositionally biased stretch (basic residues) spans 178-198; it reads MQRRRRRRRRQARKVKTPTRA.

It belongs to the type II (or gamma) interferon family. Homodimer.

The protein localises to the secreted. Cytokine which binds to interferon gamma receptor 1 (ifngr1). Also binds with lower affinity to interferon gamma receptor 1-like (ifngr1l). Has activating effects on macrophages and neutrophils. The sequence is that of Interferon gamma from Paralichthys olivaceus (Bastard halibut).